A 119-amino-acid chain; its full sequence is Hydrogenase maturation factor HypA (119 aa).

Residue His2 coordinates Ni(2+). Positions 73, 76, 89, and 92 each coordinate Zn(2+).

The protein belongs to the HypA/HybF family.

Functionally, involved in the maturation of [NiFe] hydrogenases. Required for nickel insertion into the metal center of the hydrogenase. This chain is Hydrogenase maturation factor HypA, found in Dehalococcoides mccartyi (strain ATCC BAA-2100 / JCM 16839 / KCTC 5957 / BAV1).